A 235-amino-acid chain; its full sequence is Urease accessory protein UreF (235 aa).

The protein belongs to the UreF family. UreD, UreF and UreG form a complex that acts as a GTP-hydrolysis-dependent molecular chaperone, activating the urease apoprotein by helping to assemble the nickel containing metallocenter of UreC. The UreE protein probably delivers the nickel.

Its subcellular location is the cytoplasm. Its function is as follows. Required for maturation of urease via the functional incorporation of the urease nickel metallocenter. In Haemophilus influenzae (strain PittEE), this protein is Urease accessory protein UreF.